Here is a 158-residue protein sequence, read N- to C-terminus: NAD(P)H-quinone oxidoreductase subunit J, chloroplastic (158 aa).

Belongs to the complex I 30 kDa subunit family. In terms of assembly, NDH is composed of at least 16 different subunits, 5 of which are encoded in the nucleus.

It is found in the plastid. The protein resides in the chloroplast thylakoid membrane. The catalysed reaction is a plastoquinone + NADH + (n+1) H(+)(in) = a plastoquinol + NAD(+) + n H(+)(out). It catalyses the reaction a plastoquinone + NADPH + (n+1) H(+)(in) = a plastoquinol + NADP(+) + n H(+)(out). Functionally, NDH shuttles electrons from NAD(P)H:plastoquinone, via FMN and iron-sulfur (Fe-S) centers, to quinones in the photosynthetic chain and possibly in a chloroplast respiratory chain. The immediate electron acceptor for the enzyme in this species is believed to be plastoquinone. Couples the redox reaction to proton translocation, and thus conserves the redox energy in a proton gradient. This is NAD(P)H-quinone oxidoreductase subunit J, chloroplastic from Draba nemorosa (Woodland whitlowgrass).